We begin with the raw amino-acid sequence, 685 residues long: Potassium-transporting ATPase ATP-binding subunit (685 aa).

A run of 4 helical transmembrane segments spans residues 36–56 (MFVV…PSIF), 68–88 (LIVT…ESVA), 218–238 (IALN…LVAL), and 255–275 (IALL…AIGI). Asp306 (4-aspartylphosphate intermediate) is an active-site residue. ATP-binding positions include Asp343, Glu347, 375–382 (FTAQTRMS), and Lys394. The Mg(2+) site is built by Asp517 and Asp521. 3 helical membrane passes run 587 to 607 (FAII…MNIM), 615 to 635 (AILS…PIAM), and 654 to 674 (IVFG…IDMI).

Belongs to the cation transport ATPase (P-type) (TC 3.A.3) family. Type IA subfamily. In terms of assembly, the system is composed of three essential subunits: KdpA, KdpB and KdpC.

The protein resides in the cell membrane. It catalyses the reaction K(+)(out) + ATP + H2O = K(+)(in) + ADP + phosphate + H(+). Its function is as follows. Part of the high-affinity ATP-driven potassium transport (or Kdp) system, which catalyzes the hydrolysis of ATP coupled with the electrogenic transport of potassium into the cytoplasm. This subunit is responsible for energy coupling to the transport system and for the release of the potassium ions to the cytoplasm. The sequence is that of Potassium-transporting ATPase ATP-binding subunit from Clostridium acetobutylicum (strain ATCC 824 / DSM 792 / JCM 1419 / IAM 19013 / LMG 5710 / NBRC 13948 / NRRL B-527 / VKM B-1787 / 2291 / W).